The sequence spans 510 residues: UDP-N-acetylmuramyl-tripeptide synthetase (510 aa).

Position 36 (Ser-36) interacts with UDP-N-acetyl-alpha-D-muramoyl-L-alanyl-D-glutamate. Residue 113–119 participates in ATP binding; it reads GTKGKTT. UDP-N-acetyl-alpha-D-muramoyl-L-alanyl-D-glutamate is bound by residues 159–160, Ser-186, and Arg-194; that span reads TT. Lys-228 bears the N6-carboxylysine mark.

Belongs to the MurCDEF family. MurE subfamily. Post-translationally, carboxylation is probably crucial for Mg(2+) binding and, consequently, for the gamma-phosphate positioning of ATP.

It localises to the cytoplasm. Its pathway is cell wall biogenesis; peptidoglycan biosynthesis. Functionally, catalyzes the addition of an amino acid to the nucleotide precursor UDP-N-acetylmuramoyl-L-alanyl-D-glutamate (UMAG) in the biosynthesis of bacterial cell-wall peptidoglycan. This chain is UDP-N-acetylmuramyl-tripeptide synthetase, found in Ligilactobacillus salivarius (strain UCC118) (Lactobacillus salivarius).